The primary structure comprises 717 residues: MMFDKYFRKELDWGGRKLILETGKVARQADGAVVASYGDTVVLATVVGARSVKPGQDFFPLTVNYQEKFYAAGRIPGGFFKREGRPTERETLTSRLIDRPIRPLFPHGFRNEVQVIVNVLSHDLENEPDIVSLVAASAALTLSGIPFFGPVGAARIGYIDGEYILNPTSAQIAESRLDLVLAGTEEGVLMVESEAHELSEETMLGAVTFGHAAFQPVIQAIIELAEHAAKDPWPLVEESDEEKALAARVDELAREGLRAAYAEREKTARHEKIGAVKAAVLETLAAEERSVEKAKGMFKELEADIVRNAILDNGIRIDGRDTRTVRPILAEVGVLPRTHGSALFTRGETQALVVATLGTAQDEQIVDAIEGEYRERFLLHYNFPPFSVGETGRVGSPGRREVGHGKLAWRAIHPLLPGKDKFPYTLRVVSEITESNGSSSMATVCGTSLALMDAGVPLPRPVAGIAMGLIKEDKGFAVLSDILGDEDHLGDMDFKVAGTEAGVTSLQMDIKITSITPEIMKIALDQAKDGRLHILGEMSKALTGAREGVSANAPRITVINVPKDKIRDVIGTGGKVIREIVEYSGCKIDIEDDGTIKIAATSDEQAQKAIDRIRSLTSEPEVGQIYTGKVVKIADFGAFVNFFGARDGLVHISELAQGRVARTGDVVKVGDTVKVKMIGLDDRGKVKLSMRVVDQATGADISDQVGAKGGRREDAAE.

Residues Asp-487 and Asp-493 each contribute to the Mg(2+) site. In terms of domain architecture, KH spans 554-613 (PRITVINVPKDKIRDVIGTGGKVIREIVEYSGCKIDIEDDGTIKIAATSDEQAQKAIDRI). The S1 motif domain occupies 623 to 691 (GQIYTGKVVK…DRGKVKLSMR (69 aa)).

It belongs to the polyribonucleotide nucleotidyltransferase family. It depends on Mg(2+) as a cofactor.

It localises to the cytoplasm. It carries out the reaction RNA(n+1) + phosphate = RNA(n) + a ribonucleoside 5'-diphosphate. Functionally, involved in mRNA degradation. Catalyzes the phosphorolysis of single-stranded polyribonucleotides processively in the 3'- to 5'-direction. In Acidiphilium cryptum (strain JF-5), this protein is Polyribonucleotide nucleotidyltransferase.